The primary structure comprises 158 residues: MIRIGHGFDVHKFGGEGPVIIGGVAIPYEQGLIAHSDGDVALHALTDALLGAIAAGDIGRHFPDTDDKWKGADSRELLKDVYRRVKEQGYRLGNADVTIMAQAPKMAPHIDAMCAAIAEDLETDISNINVKATTTERLGFTGRKEGIATEAVVLLFKQ.

A divalent metal cation contacts are provided by Asp-9 and His-11. 4-CDP-2-C-methyl-D-erythritol 2-phosphate-binding positions include 9 to 11 and 35 to 36; these read DVH and HS. His-43 contacts a divalent metal cation. 4-CDP-2-C-methyl-D-erythritol 2-phosphate-binding positions include 57–59, 62–66, 101–107, 133–136, Phe-140, and Arg-143; these read DIG, FPDTD, AQAPKMA, and TTTE.

It belongs to the IspF family. In terms of assembly, homotrimer. Requires a divalent metal cation as cofactor.

The enzyme catalyses 4-CDP-2-C-methyl-D-erythritol 2-phosphate = 2-C-methyl-D-erythritol 2,4-cyclic diphosphate + CMP. Its pathway is isoprenoid biosynthesis; isopentenyl diphosphate biosynthesis via DXP pathway; isopentenyl diphosphate from 1-deoxy-D-xylulose 5-phosphate: step 4/6. Its function is as follows. Involved in the biosynthesis of isopentenyl diphosphate (IPP) and dimethylallyl diphosphate (DMAPP), two major building blocks of isoprenoid compounds. Catalyzes the conversion of 4-diphosphocytidyl-2-C-methyl-D-erythritol 2-phosphate (CDP-ME2P) to 2-C-methyl-D-erythritol 2,4-cyclodiphosphate (ME-CPP) with a corresponding release of cytidine 5-monophosphate (CMP). The protein is 2-C-methyl-D-erythritol 2,4-cyclodiphosphate synthase of Vibrio campbellii (strain ATCC BAA-1116).